The chain runs to 394 residues: Elongation factor Tu (394 aa).

A tr-type G domain is found at 10-204; that stretch reads KPHVNVGTIG…ALDSYIPEPE (195 aa). A G1 region spans residues 19 to 26; it reads GHVDHGKT. 19-26 lines the GTP pocket; it reads GHVDHGKT. Thr26 is a Mg(2+) binding site. The tract at residues 60–64 is G2; that stretch reads GITIS. The interval 81-84 is G3; the sequence is DCPG. GTP contacts are provided by residues 81–85 and 136–139; these read DCPGH and NKCD. Residues 136-139 are G4; the sequence is NKCD. The segment at 174-176 is G5; it reads SAL.

It belongs to the TRAFAC class translation factor GTPase superfamily. Classic translation factor GTPase family. EF-Tu/EF-1A subfamily. Monomer.

The protein resides in the cytoplasm. The enzyme catalyses GTP + H2O = GDP + phosphate + H(+). In terms of biological role, GTP hydrolase that promotes the GTP-dependent binding of aminoacyl-tRNA to the A-site of ribosomes during protein biosynthesis. The polypeptide is Elongation factor Tu (Pseudoalteromonas atlantica (strain T6c / ATCC BAA-1087)).